The chain runs to 47 residues: Large ribosomal subunit protein bL33 (47 aa).

Belongs to the bacterial ribosomal protein bL33 family.

This Staphylococcus capitis protein is Large ribosomal subunit protein bL33.